The primary structure comprises 362 residues: MSAAPLCLIAAGGTGGHMFPAQSLAETLLAQGWRVKLSTDERGARYAGAFPAEVAREVVSSATTARGGALARLAVPFRIGAGVLAAIRAMRADRPAVVVGFGGYPTIPAMSAALVLRIPRMIHEQNGIMGRVNMAFARRVDRVACGTWPTRLPPGVQGIHTGNPVRQAVLDRAGAPYVPPGEGGLNLLVIGGSQGARVLSDMVPEAIAGLPDEMRTRLSVSHQARAEDAERVIAAYASAGISAVVRPFFDDVPQRLADCQLVISRAGASSIADITVIGRPAILIPYAAATGDHQTANARALAESGAGVVLPESVLDAESLRRDMRDILSDSARATAMAAAALTLARPDAAQRLADLVTELTR.

Residues 14 to 16 (TGG), Asn126, Arg166, Ser193, and Gln294 contribute to the UDP-N-acetyl-alpha-D-glucosamine site.

Belongs to the glycosyltransferase 28 family. MurG subfamily.

The protein localises to the cell inner membrane. The enzyme catalyses di-trans,octa-cis-undecaprenyl diphospho-N-acetyl-alpha-D-muramoyl-L-alanyl-D-glutamyl-meso-2,6-diaminopimeloyl-D-alanyl-D-alanine + UDP-N-acetyl-alpha-D-glucosamine = di-trans,octa-cis-undecaprenyl diphospho-[N-acetyl-alpha-D-glucosaminyl-(1-&gt;4)]-N-acetyl-alpha-D-muramoyl-L-alanyl-D-glutamyl-meso-2,6-diaminopimeloyl-D-alanyl-D-alanine + UDP + H(+). It functions in the pathway cell wall biogenesis; peptidoglycan biosynthesis. Functionally, cell wall formation. Catalyzes the transfer of a GlcNAc subunit on undecaprenyl-pyrophosphoryl-MurNAc-pentapeptide (lipid intermediate I) to form undecaprenyl-pyrophosphoryl-MurNAc-(pentapeptide)GlcNAc (lipid intermediate II). This Paracoccus denitrificans (strain Pd 1222) protein is UDP-N-acetylglucosamine--N-acetylmuramyl-(pentapeptide) pyrophosphoryl-undecaprenol N-acetylglucosamine transferase.